The primary structure comprises 424 residues: 3-ketoacyl-CoA thiolase B, peroxisomal (424 aa).

Residues 1-26 constitute a peroxisome transit peptide; that stretch reads MHRLQVVLGHLAGRPESSSALQAAPC. The interval 1–26 is PTS2-type peroxisomal targeting signal; it reads MHRLQVVLGHLAGRPESSSALQAAPC. Cys-123 functions as the Acyl-thioester intermediate in the catalytic mechanism. 2 positions are modified to N6-acetyllysine: Lys-173 and Lys-234. CoA-binding residues include Arg-249, Thr-252, and Ser-276. Catalysis depends on Cys-408, which acts as the Proton donor/acceptor.

The protein belongs to the thiolase-like superfamily. Thiolase family. As to quaternary structure, homodimer. Interacts (via PTS2-type peroxisomal targeting signal region) with PEX7; leading to its translocation into peroxisomes. Mainly expressed in liver; weaker levels in kidney, intestine and white adipose tissue.

Its subcellular location is the peroxisome. The catalysed reaction is an acyl-CoA + acetyl-CoA = a 3-oxoacyl-CoA + CoA. It carries out the reaction 2 acetyl-CoA = acetoacetyl-CoA + CoA. The enzyme catalyses hexanoyl-CoA + acetyl-CoA = 3-oxooctanoyl-CoA + CoA. It catalyses the reaction tetradecanoyl-CoA + acetyl-CoA = 3-oxohexadecanoyl-CoA + CoA. The catalysed reaction is 3-oxohexadecanedioyl-CoA + CoA = tetradecanedioyl-CoA + acetyl-CoA. It carries out the reaction 3-oxo-(6Z,9Z,12Z,15Z,18Z,21Z)-tetracosahexaenoyl-CoA + CoA = (4Z,7Z,10Z,13Z,16Z,19Z)-docosahexaenoyl-CoA + acetyl-CoA. Its pathway is lipid metabolism; peroxisomal fatty acid beta-oxidation. Responsible for the thiolytic cleavage of straight chain 3-keto fatty acyl-CoAs (3-oxoacyl-CoAs). Plays an important role in fatty acid peroxisomal beta-oxidation. Catalyzes the cleavage of short, medium, long, and very long straight chain 3-oxoacyl-CoAs. The sequence is that of 3-ketoacyl-CoA thiolase B, peroxisomal from Mus musculus (Mouse).